The chain runs to 4981 residues: Protocadherin Fat 4 (4981 aa).

An N-terminal signal peptide occupies residues 1-42 (MNLAANRAPGRRRLPLPSPSLCQLLRVWGLLSLLPGSARVQA). At 43–4505 (AEQRQVFQVM…PDEISLPLWA (4463 aa)) the chain is on the extracellular side. Cadherin domains lie at 44–135 (EQRQ…APVF), 136–250 (PDPS…PPVF), 251–353 (GSSH…DPVV), 359–475 (PATS…PPVF), 476–582 (EQQV…KPVF), 584–689 (QPEG…SPVF), 690–793 (YPVQ…PPVF), 794–893 (SQAA…APHF), 894–996 (LQAV…PPVF), 997–1100 (DQIS…RPLF), 1101–1210 (NSTN…APKF), 1211–1315 (LKDF…TPSF), 1316–1420 (PKST…PPSF), 1421–1529 (PPGD…VPMF), 1529–1629 (FISQ…GPVF), 1630–1740 (TQTK…PPVF), 1741–1841 (PTDT…TPRF), 1842–1944 (SRPV…PPVF), 1945–2051 (SMSS…PPMF), 2051–2154 (FLSP…NPVF), 2155–2259 (AQAM…VPVF), 2260–2364 (ELSP…VPTF), 2365–2468 (ANNM…PPRF), 2469–2569 (QHHP…FPKV), 2570–2671 (RAKE…APTF), 2672–2775 (EEDP…APRF), 2775–2874 (FSQI…TPRF), 2875–2985 (SRPS…PPQF), 2986–3091 (LQNK…TPEF), 3092–3196 (SQNH…SPVF), 3197–3300 (VPDE…VPRF), 3301–3406 (VSKL…PPVF), 3407–3512 (SLST…GPVL), and 3511–3622 (VLTV…VEIF). Asparagine 84 and asparagine 237 each carry an N-linked (GlcNAc...) asparagine glycan. Residues asparagine 393, asparagine 416, asparagine 435, asparagine 483, asparagine 551, asparagine 615, asparagine 676, asparagine 721, asparagine 825, asparagine 880, asparagine 948, asparagine 1085, asparagine 1101, asparagine 1104, asparagine 1225, asparagine 1296, asparagine 1389, and asparagine 1514 are each glycosylated (N-linked (GlcNAc...) asparagine). 4 N-linked (GlcNAc...) asparagine glycosylation sites follow: asparagine 1828, asparagine 1899, asparagine 1967, and asparagine 2119. 2 N-linked (GlcNAc...) asparagine glycosylation sites follow: asparagine 2387 and asparagine 2432. 7 N-linked (GlcNAc...) asparagine glycosylation sites follow: asparagine 2923, asparagine 2939, asparagine 3038, asparagine 3142, asparagine 3219, asparagine 3394, and asparagine 3479. Residues asparagine 3708 and asparagine 3760 are each glycosylated (N-linked (GlcNAc...) asparagine). An EGF-like 1 domain is found at 3804–3862 (DHDPCIHGPCQNGGSCLRRLAVGSALKIQESLPVIIVANEPLQPSQCKCVPGYAGSWCE). 12 cysteine pairs are disulfide-bonded: cysteine 3808-cysteine 3819, cysteine 3813-cysteine 3850, cysteine 3852-cysteine 3861, cysteine 3868-cysteine 3879, cysteine 3873-cysteine 3888, cysteine 3890-cysteine 3899, cysteine 3906-cysteine 3917, cysteine 3911-cysteine 3926, cysteine 3928-cysteine 3937, cysteine 3944-cysteine 3955, cysteine 3949-cysteine 3964, and cysteine 3966-cysteine 3975. The region spanning 3864-3900 (DIDECLPAPCHNGGTCHNLVGGFSCSCPEGFTGRACE) is the EGF-like 2; calcium-binding domain. In terms of domain architecture, EGF-like 3; calcium-binding spans 3902–3938 (DINECLPSPCKHGAVCQNFPGGFNCVCKTGYTGKMCE). The 37-residue stretch at 3940–3976 (SVNYCECNPCFNGGSCQSGVESYYCHCPFGVFGKHCE) folds into the EGF-like 4 domain. Positions 3977–4161 (LNSYGFEELS…LAAQGILDQC (185 aa)) constitute a Laminin G-like 1 domain. N-linked (GlcNAc...) asparagine glycosylation is present at asparagine 4019. 4 cysteine pairs are disulfide-bonded: cysteine 4135-cysteine 4161, cysteine 4168-cysteine 4179, cysteine 4173-cysteine 4188, and cysteine 4190-cysteine 4199. The EGF-like 5 domain maps to 4164–4200 (LEGTCARNPCQHGGTCVDFWSWQQCQCMEGLTGKYCE). The region spanning 4219-4399 (YHMSQSEKRE…KTDPSVKIGC (181 aa)) is the Laminin G-like 2 domain. Asparagine 4269 and asparagine 4314 each carry an N-linked (GlcNAc...) asparagine glycan. Intrachain disulfides connect cysteine 4366–cysteine 4399, cysteine 4431–cysteine 4442, cysteine 4436–cysteine 4452, and cysteine 4454–cysteine 4463. One can recognise an EGF-like 6 domain in the interval 4427–4464 (PPGDCASHPCQNGGSCEPGLLSGYTCSCPESHTGRTCE). A helical transmembrane segment spans residues 4506–4526 (VPAIVGSCATALALLVLSLIL). Residues 4527–4981 (CNQCRGKMPK…AKDGEAEQYV (455 aa)) lie on the Cytoplasmic side of the membrane. Disordered regions lie at residues 4535–4585 (PKNP…PDII), 4677–4713 (PSSYGQGLRTSSLSHSACPTPNPLSRHSPAPFSKPSA), 4753–4773 (RRSKSPQAMASHGSRPGSRLK), 4796–4911 (RLNT…PAAA), and 4957–4981 (AAGNEEGKSGAAKPAAKDGEAEQYV). A compositionally biased stretch (polar residues) spans 4677-4701 (PSSYGQGLRTSSLSHSACPTPNPLS). Positions 4708–4797 (FSKPSAFYRN…GLSIEEVERL (90 aa)) are necessary and sufficient for interaction with MPDZ. Residues 4811-4823 (DHGRSSSEEDCRR) are compositionally biased toward basic and acidic residues. Serine 4878 bears the Phosphoserine mark. Over residues 4971–4981 (AAKDGEAEQYV) the composition is skewed to basic and acidic residues.

In terms of assembly, heterophilic interaction with DCHS1; this interaction affects their respective protein levels. Interacts (via cytoplasmic domain) with MPDZ. Forms a complex with PALS1 and MPDZ. In terms of tissue distribution, widely expressed.

It is found in the membrane. Functionally, cadherins are cell-cell interaction molecules. FAT4 plays a role in the maintenance of planar cell polarity as well as in inhibition of YAP1-mediated neuroprogenitor cell proliferation and differentiation. This chain is Protocadherin Fat 4 (Fat4), found in Mus musculus (Mouse).